We begin with the raw amino-acid sequence, 273 residues long: Glutamate 5-kinase (273 aa).

Lysine 15 is an ATP binding site. Serine 55, aspartate 142, and asparagine 158 together coordinate substrate. ATP contacts are provided by residues serine 178–aspartate 179 and threonine 220–lysine 226.

Belongs to the glutamate 5-kinase family.

Its subcellular location is the cytoplasm. The enzyme catalyses L-glutamate + ATP = L-glutamyl 5-phosphate + ADP. Its pathway is amino-acid biosynthesis; L-proline biosynthesis; L-glutamate 5-semialdehyde from L-glutamate: step 1/2. Functionally, catalyzes the transfer of a phosphate group to glutamate to form L-glutamate 5-phosphate. The sequence is that of Glutamate 5-kinase from Streptococcus pyogenes serotype M1.